The following is a 310-amino-acid chain: uncharacterized protein (310 aa).

A disordered region spans residues 1–70 (MAGNSQRRGA…ARGRTDETET (70 aa)). A compositionally biased stretch (basic residues) spans 49-62 (AAKRAKAQQRRPAR). The S-adenosyl-L-methionine site is built by Gly-262, Val-282, and Leu-291.

It belongs to the class IV-like SAM-binding methyltransferase superfamily. RNA methyltransferase TrmH family.

This is an uncharacterized protein from Mycobacterium marinum (strain ATCC BAA-535 / M).